The primary structure comprises 167 residues: Transcription antitermination protein NusB (167 aa).

The protein belongs to the NusB family.

In terms of biological role, involved in transcription antitermination. Required for transcription of ribosomal RNA (rRNA) genes. Binds specifically to the boxA antiterminator sequence of the ribosomal RNA (rrn) operons. This is Transcription antitermination protein NusB from Nitrosomonas europaea (strain ATCC 19718 / CIP 103999 / KCTC 2705 / NBRC 14298).